The following is a 1242-amino-acid chain: MNATFRPKPAGSRWTDEQWKAIAAGGRDILVAAAAGSGKTAVLVERIIQKVTAEEGAVDIDRLLVVTFTNAAAAEMKARIGEALERELANRPHSLHLRRQLSLLNRASISTLHSFCLDVIRKYYYLLDLDPSFRIADETEIELLKEDVLEELLEEEYGKADNERFFAVVDAYTGDRSDAELQEMILALYEFSRSHPAPDEWLADLVSMYDVDEQTNVETLPPARYIAQHAAMELAAAKRFIGLALALAEKESGPKPYEKRLREDMDLIADLERRLSGSWDELYHALQSLSFGRLPPCRGDGFDAELIDEAKSLRDQAKKKIEALRDNVFSLHPSAWLRHMREMKPVVETIAALVRRFSAMFEAAKREKGIVDFSDLEHYCLRILRQYDPETGEWQPSSAALEYQAQFDEVLVDEYQDTNLVQETILQLVKKGSERTGNLFMVGDVKQSIYRFRLAEPMLFLDKYKRFTADGEAGGMKIDLASNFRSRAEVLDGTNFLFAQIMGEAVGEMVYDEAAQLKYGADYPEGTDAVPEVMIIDRQRTSEEDEEETAELEAAELESRLMAEKIKEIVSRPFYVYDRSSGQQRRAMYRDIVVLVRSMTNAPQMIEQLQAQGIPAAADLSSGYFQATEISVMLSLLKVIDNPYQDIPLAAVLRSPLFRFDENELAMIRLSDPKGTFFEALQAFCQKTAETGEEENAKEKAISFLNKLEEWRTMARRRSLADLIWQLYRDTQFYDFVGALPGGKQRQANLRALYDRARQYESTSFRGLFRFLRFIERLQERGDDLGAARPLGDQEDVVRVMTIHSSKGLEFPIVFLVGLARPFYTRDLHSPYLLDKELGFAARFVHPRLRISYPTLPLLAIQVKKRLELLAEEMRILYVALTRAKEKLYLLASVNDADKEIEKWKGVAAESGWLLPDDVRASARSYLDWIGRALIRHRDGRSLVEVNRPDEIASHPSVWRFEIVSAAKLRNAEVSTDREDGGALVALEQGRPVPTQGEWEEEARRRLLWRYRYGKETVVRAKQSVSELKEQQALFGEQADEWLPRKGTAPLFSRPRFMQEKTLTPAEKGTALHVVMRHLDLHAPMDESSIRSQIIRLVEKELLSAEQAETVDAAAIVAFFATDIGRRLCAAREVYREVPFSLGLPADELYGSEGMESGRRLLVQGVVDCVFADERGYVVIDYKTDEVTGRFAGQKEEATRFLLGRYGGQMRLYRRAIEQIWRVPVAECYLYSFDGEYFLAVE.

One can recognise a UvrD-like helicase ATP-binding domain in the interval 12-487; it reads SRWTDEQWKA…IDLASNFRSR (476 aa). Position 33 to 40 (33 to 40) interacts with ATP; the sequence is AAAGSGKT. The region spanning 514–808 is the UvrD-like helicase C-terminal domain; sequence AAQLKYGADY…RVMTIHSSKG (295 aa).

The protein belongs to the helicase family. AddA subfamily. As to quaternary structure, heterodimer of AddA and AddB/RexB. Mg(2+) is required as a cofactor.

The catalysed reaction is Couples ATP hydrolysis with the unwinding of duplex DNA by translocating in the 3'-5' direction.. It carries out the reaction ATP + H2O = ADP + phosphate + H(+). The heterodimer acts as both an ATP-dependent DNA helicase and an ATP-dependent, dual-direction single-stranded exonuclease. Recognizes the chi site generating a DNA molecule suitable for the initiation of homologous recombination. The AddA nuclease domain is required for chi fragment generation; this subunit has the helicase and 3' -&gt; 5' nuclease activities. In Geobacillus thermodenitrificans (strain NG80-2), this protein is ATP-dependent helicase/nuclease subunit A.